A 454-amino-acid polypeptide reads, in one-letter code: Histidine--tRNA ligase (454 aa).

The protein belongs to the class-II aminoacyl-tRNA synthetase family. In terms of assembly, homodimer.

The protein localises to the cytoplasm. The catalysed reaction is tRNA(His) + L-histidine + ATP = L-histidyl-tRNA(His) + AMP + diphosphate + H(+). The protein is Histidine--tRNA ligase of Phocaeicola vulgatus (strain ATCC 8482 / DSM 1447 / JCM 5826 / CCUG 4940 / NBRC 14291 / NCTC 11154) (Bacteroides vulgatus).